A 29-amino-acid chain; its full sequence is Potassium channel toxin alpha-KTx 20.1 (29 aa).

3 cysteine pairs are disulfide-bonded: cysteine 2/cysteine 20, cysteine 7/cysteine 24, and cysteine 11/cysteine 26.

This sequence belongs to the short scorpion toxin superfamily. Potassium channel inhibitor family. Alpha-KTx 20 subfamily. In terms of tissue distribution, expressed by the venom gland.

It is found in the secreted. Its function is as follows. Reduces potassium currents through Kv1.2/KCNA2 and Kv1.3/KCNA3 voltage-gated potassium channels. This chain is Potassium channel toxin alpha-KTx 20.1, found in Tityus trivittatus (Argentinean scorpion).